Consider the following 22-residue polypeptide: Alpha-amylase inhibitor DR4 (22 aa).

The disordered stretch occupies residues 1–22 (SGGGKEAAETFNRVESHPRPDA).

In terms of biological role, inhibits insect alpha-amylases. In Delonix regia (Royal poinciana), this protein is Alpha-amylase inhibitor DR4.